A 549-amino-acid chain; its full sequence is Polynucleotide 5'-hydroxyl-kinase nol-9 (549 aa).

190–197 provides a ligand contact to ATP; it reads GHKGAGKS.

This sequence belongs to the Clp1 family. NOL9/GRC3 subfamily.

The protein localises to the nucleus. The protein resides in the nucleolus. In terms of biological role, polynucleotide 5'-kinase involved in rRNA processing. The polypeptide is Polynucleotide 5'-hydroxyl-kinase nol-9 (nol-9) (Caenorhabditis elegans).